Consider the following 53-residue polypeptide: Alpha-1-antiproteinase 1 (53 aa).

A disordered region spans residues 1–28; sequence EDLQGDAVPETSATKDDNEXPEMIPMSL.

This sequence belongs to the serpin family. In terms of processing, N-glycosylated; contains biantennary glycans. Plasma.

The protein resides in the secreted. This chain is Alpha-1-antiproteinase 1, found in Equus caballus (Horse).